Consider the following 261-residue polypeptide: 5'-nucleotidase SurE (261 aa).

A divalent metal cation-binding residues include aspartate 8, aspartate 9, serine 43, and asparagine 96.

Belongs to the SurE nucleotidase family. A divalent metal cation serves as cofactor.

The protein localises to the cytoplasm. The enzyme catalyses a ribonucleoside 5'-phosphate + H2O = a ribonucleoside + phosphate. In terms of biological role, nucleotidase that shows phosphatase activity on nucleoside 5'-monophosphates. This chain is 5'-nucleotidase SurE, found in Cereibacter sphaeroides (strain ATCC 17023 / DSM 158 / JCM 6121 / CCUG 31486 / LMG 2827 / NBRC 12203 / NCIMB 8253 / ATH 2.4.1.) (Rhodobacter sphaeroides).